Here is a 796-residue protein sequence, read N- to C-terminus: MPDRKIGDYVVGAEIGRGSFANVYKGYNSKTQVSVAIKSVIKSRLRNKKLIENLEVEISILKNLKHPHVVALLDCEQSKHYFHLLMEYCSLGDLSYFITKREELISNHPLITGVFKKYPSPENSKGLNEVITINFVQQLASALKFLRSQNLVHRDIKPQNLLLSPPVSREVFEDRKYTGLWELPVLKIADFGFARFLPATSMAETLCGSPLYMAPEILRYEKYNAKADLWSVGAVVYEMSVGTPPFPAHNHVELLRNIERQKDKISFPKVAQVPPEIIQLICGLLKQQATERMSFQEFFNDPVITTKLQPCSDEPLLPQNQHIDENLFISEYLPRNSITDKNINNNITNIAKNGVEEALLEEEDEEEDQDQLPSKNDNIQHMEPDSSMLLNKTTQKQTEVQSQPRRELVSEKDYVVVEKRAVEVNALADELEHAGSGALAMQLTNNVGTPYTRRYSSSSRSSSTGSNQRRPSFGDRKVPISISPTNALSKAINIASNRLFKQPSPPKATPVLLEEKDKDKNTERLTSTVFNQNMLNSTTTREITRPLHSLTITSSTSDEEIIQRLSNLTTKAYAIKLLAEIKFSQLAPLPPSNETAVFDNYGDDEGTQSGYNNEPLSPILIKTIGEEGIALYVKTLFLLSKAMNIAMEWWRLNSLSRPASPKLNDLVQWIRGKFNESLEKAEFIKLKLQNAKEQLEESESDTDKTVVAEKLIFDRAIEISRIAVVNELKNDDLVGTELSYATAIWMLEALLEPDDTEESKLDDEDRKMIEKFISSIGNRLSVLRKKIESTSQETRK.

Residues 9–304 (YVVGAEIGRG…FQEFFNDPVI (296 aa)) form the Protein kinase domain. ATP contacts are provided by residues 15–23 (IGRGSFANV) and Lys-38. The active-site Proton acceptor is Asp-155. Positions 360–370 (LEEEDEEEDQD) are enriched in acidic residues. 3 disordered regions span residues 360 to 382 (LEEE…IQHM), 389 to 408 (LLNK…RREL), and 450 to 480 (PYTR…KVPI). Residues 389 to 403 (LLNKTTQKQTEVQSQ) show a composition bias toward polar residues. The span at 453 to 470 (RRYSSSSRSSSTGSNQRR) shows a compositional bias: low complexity.

This sequence belongs to the protein kinase superfamily. Ser/Thr protein kinase family. APG1/unc-51/ULK1 subfamily. In terms of assembly, homodimer. Forms a ternary complex with ATG13 and ATG17.

It localises to the cytoplasm. It is found in the preautophagosomal structure membrane. The catalysed reaction is L-seryl-[protein] + ATP = O-phospho-L-seryl-[protein] + ADP + H(+). It catalyses the reaction L-threonyl-[protein] + ATP = O-phospho-L-threonyl-[protein] + ADP + H(+). In terms of biological role, serine/threonine protein kinase involved in the cytoplasm to vacuole transport (Cvt) and found to be essential in autophagy, where it is required for the formation of autophagosomes. Involved in the clearance of protein aggregates which cannot be efficiently cleared by the proteasome. Required for selective autophagic degradation of the nucleus (nucleophagy) as well as for mitophagy which contributes to regulate mitochondrial quantity and quality by eliminating the mitochondria to a basal level to fulfill cellular energy requirements and preventing excess ROS production. Also involved in endoplasmic reticulum-specific autophagic process, in selective removal of ER-associated degradation (ERAD) substrates. Plays a key role in ATG9 and ATG23 cycling through the pre-autophagosomal structure and is necessary to promote ATG18 binding to ATG9 through phosphorylation of ATG9. Catalyzes phosphorylation of ATG4, decreasing the interaction between ATG4 and ATG8 and impairing deconjugation of PE-conjugated forms of ATG8. The chain is Serine/threonine-protein kinase ATG1 from Komagataella pastoris (Yeast).